We begin with the raw amino-acid sequence, 746 residues long: Dystrobrevin alpha (746 aa).

Residues 1-288 are interaction with MAGEE1; it reads MIEDSGKRGN…SHSNQHQMKE (288 aa). The ZZ-type zinc finger occupies 238–294; it reads FHPVECSYCHSESMMGFRYRCQQCHNYQLCQDCFWRGHAGGSHSNQHQMKEYTSWKS. Zn(2+) is bound by residues Cys-243, Cys-246, Cys-258, Cys-261, Cys-267, Cys-270, His-280, and His-284. Residues 397–447 are syntrophin-binding region; the sequence is DRLADEHVLIGLYVNMLRNDPPCMLESSNRLDEEHRLIARYAARLAAESSS. Positions 458–557 form a coiled coil; that stretch reads DISFTIDANK…KLLKEEELKQ (100 aa). Disordered stretches follow at residues 555 to 577, 646 to 667, and 684 to 721; these read LKQGTQGASSPRSSPSHTISRPI, ETESTVDSEFSRPQFEDLAPSP, and YIHGGAASTTHGDMVPEDGDPYTQPEDGNYENESVRQL. The segment covering 563 to 576 has biased composition (low complexity); it reads SSPRSSPSHTISRP. Ser-666 bears the Phosphoserine mark.

This sequence belongs to the dystrophin family. Dystrobrevin subfamily. Interacts with dystrophin, utrophin and the syntrophins SNTA1, SNTB1, SNTB2, SNTG1 and SNTG2. Binds dystrobrevin binding protein 1. Interacts with MAGEE1. Interacts with Ctnnal1. The interaction is required for correct localization of both Ctnnal1 and Dtna. As to quaternary structure, does not interact with utrophin. In terms of assembly, does not interact with syntrophin. In terms of processing, phosphorylation of isoform 2 on tyrosine kinase substrate domain present in the C-terminus. As to expression, expressed in skeletal muscle, heart, lung and brain. Sarcolemma and neuromuscular junction in skeletal muscle. Isoform 2 is restricted to the neuromuscular junction. Isoforms 5 and 6 are only expressed in muscle.

The protein localises to the cytoplasm. It localises to the synapse. Its subcellular location is the cell membrane. Its function is as follows. Involved in synapse maturation and required for normal muscle function. In Mus musculus (Mouse), this protein is Dystrobrevin alpha (Dtna).